A 598-amino-acid chain; its full sequence is Glutamyl-tRNA(Gln) amidotransferase subunit E (598 aa).

This sequence belongs to the GatB/GatE family. GatE subfamily. As to quaternary structure, heterodimer of GatD and GatE.

The catalysed reaction is L-glutamyl-tRNA(Gln) + L-glutamine + ATP + H2O = L-glutaminyl-tRNA(Gln) + L-glutamate + ADP + phosphate + H(+). Its function is as follows. Allows the formation of correctly charged Gln-tRNA(Gln) through the transamidation of misacylated Glu-tRNA(Gln) in organisms which lack glutaminyl-tRNA synthetase. The reaction takes place in the presence of glutamine and ATP through an activated gamma-phospho-Glu-tRNA(Gln). The GatDE system is specific for glutamate and does not act on aspartate. The sequence is that of Glutamyl-tRNA(Gln) amidotransferase subunit E from Thermoplasma volcanium (strain ATCC 51530 / DSM 4299 / JCM 9571 / NBRC 15438 / GSS1).